The following is a 465-amino-acid chain: Glutamate--tRNA ligase (465 aa).

Positions 10–20 match the 'HIGH' region motif; it reads PSPTGQLHIGG. 4 residues coordinate Zn(2+): Cys-99, Cys-101, Cys-126, and Glu-128. The 'KMSKS' region signature appears at 236–240; sequence KLSKR. Lys-239 serves as a coordination point for ATP.

Belongs to the class-I aminoacyl-tRNA synthetase family. Glutamate--tRNA ligase type 1 subfamily. As to quaternary structure, monomer. Requires Zn(2+) as cofactor.

The protein localises to the cytoplasm. It catalyses the reaction tRNA(Glu) + L-glutamate + ATP = L-glutamyl-tRNA(Glu) + AMP + diphosphate. In terms of biological role, catalyzes the attachment of glutamate to tRNA(Glu) in a two-step reaction: glutamate is first activated by ATP to form Glu-AMP and then transferred to the acceptor end of tRNA(Glu). The protein is Glutamate--tRNA ligase of Lawsonia intracellularis (strain PHE/MN1-00).